The sequence spans 120 residues: Large ribosomal subunit protein bL12 (120 aa).

The protein belongs to the bacterial ribosomal protein bL12 family. As to quaternary structure, homodimer. Part of the ribosomal stalk of the 50S ribosomal subunit. Forms a multimeric L10(L12)X complex, where L10 forms an elongated spine to which 2 to 4 L12 dimers bind in a sequential fashion. Binds GTP-bound translation factors.

Functionally, forms part of the ribosomal stalk which helps the ribosome interact with GTP-bound translation factors. Is thus essential for accurate translation. The protein is Large ribosomal subunit protein bL12 of Listeria welshimeri serovar 6b (strain ATCC 35897 / DSM 20650 / CCUG 15529 / CIP 8149 / NCTC 11857 / SLCC 5334 / V8).